The primary structure comprises 171 residues: T-cell surface glycoprotein CD3 delta chain (171 aa).

The N-terminal stretch at 1-21 (MEHSTFLSGLVLATLLSQVSP) is a signal peptide. Residues 22–105 (FKIPVEELED…CVELDPATLA (84 aa)) are Extracellular-facing. Residues C37 and C73 are joined by a disulfide bond. Residues N38, N54, and N74 are each glycosylated (N-linked (GlcNAc...) asparagine). The helical transmembrane segment at 106–126 (GIIVTDVIATLLLALGVFCFA) threads the bilayer. At 127–171 (GHETGRLSGAADTQALLRNDQVYQPLRDRDDAQYSRLGGNWARNK) the chain is on the cytoplasmic side. The ITAM domain maps to 138–166 (DTQALLRNDQVYQPLRDRDDAQYSRLGGN). Phosphotyrosine is present on residues Y149 and Y160.

As to quaternary structure, the TCR-CD3 complex is composed of a CD3D/CD3E and a CD3G/CD3E heterodimers that preferentially associate with TCRalpha and TCRbeta, respectively, to form TCRalpha/CD3E/CD3G and TCRbeta/CD3G/CD3E trimers. In turn, the hexamer interacts with CD3Z homodimer to form the TCR-CD3 complex. Alternatively, TCRalpha and TCRbeta can be replaced by TCRgamma and TCRdelta. Interacts with coreceptors CD4 and CD8. In terms of processing, phosphorylated on Tyr residues after T-cell receptor triggering by LCK in association with CD4/CD8. CD3D is mostly present on T-lymphocytes with its TCR-CD3 partners. Present also in fetal NK-cells.

It is found in the cell membrane. Functionally, part of the TCR-CD3 complex present on T-lymphocyte cell surface that plays an essential role in adaptive immune response. When antigen presenting cells (APCs) activate T-cell receptor (TCR), TCR-mediated signals are transmitted across the cell membrane by the CD3 chains CD3D, CD3E, CD3G and CD3Z. All CD3 chains contain immunoreceptor tyrosine-based activation motifs (ITAMs) in their cytoplasmic domain. Upon TCR engagement, these motifs become phosphorylated by Src family protein tyrosine kinases LCK and FYN, resulting in the activation of downstream signaling pathways. In addition of this role of signal transduction in T-cell activation, CD3D plays an essential role in thymocyte differentiation. Indeed, participates in correct intracellular TCR-CD3 complex assembly and surface expression. In absence of a functional TCR-CD3 complex, thymocytes are unable to differentiate properly. Interacts with CD4 and CD8 and thus serves to establish a functional link between the TCR and coreceptors CD4 and CD8, which is needed for activation and positive selection of CD4 or CD8 T-cells. This Macaca fascicularis (Crab-eating macaque) protein is T-cell surface glycoprotein CD3 delta chain (CD3D).